The following is a 364-amino-acid chain: Peptide chain release factor 1 (364 aa).

Gln237 carries the N5-methylglutamine modification.

It belongs to the prokaryotic/mitochondrial release factor family. In terms of processing, methylated by PrmC. Methylation increases the termination efficiency of RF1.

It is found in the cytoplasm. Its function is as follows. Peptide chain release factor 1 directs the termination of translation in response to the peptide chain termination codons UAG and UAA. The protein is Peptide chain release factor 1 of Rubrobacter xylanophilus (strain DSM 9941 / JCM 11954 / NBRC 16129 / PRD-1).